The following is a 290-amino-acid chain: ATP synthase gamma chain (290 aa).

It belongs to the ATPase gamma chain family. F-type ATPases have 2 components, CF(1) - the catalytic core - and CF(0) - the membrane proton channel. CF(1) has five subunits: alpha(3), beta(3), gamma(1), delta(1), epsilon(1). CF(0) has three main subunits: a, b and c.

It localises to the cell inner membrane. Its function is as follows. Produces ATP from ADP in the presence of a proton gradient across the membrane. The gamma chain is believed to be important in regulating ATPase activity and the flow of protons through the CF(0) complex. The sequence is that of ATP synthase gamma chain from Phenylobacterium zucineum (strain HLK1).